We begin with the raw amino-acid sequence, 417 residues long: Serine hydroxymethyltransferase (417 aa).

(6S)-5,6,7,8-tetrahydrofolate is bound by residues Leu-120 and 124–126 (GHL). The residue at position 229 (Lys-229) is an N6-(pyridoxal phosphate)lysine. 354 to 356 (SPF) is a (6S)-5,6,7,8-tetrahydrofolate binding site.

The protein belongs to the SHMT family. As to quaternary structure, homodimer. Pyridoxal 5'-phosphate serves as cofactor.

The protein resides in the cytoplasm. It catalyses the reaction (6R)-5,10-methylene-5,6,7,8-tetrahydrofolate + glycine + H2O = (6S)-5,6,7,8-tetrahydrofolate + L-serine. It participates in one-carbon metabolism; tetrahydrofolate interconversion. Its pathway is amino-acid biosynthesis; glycine biosynthesis; glycine from L-serine: step 1/1. Catalyzes the reversible interconversion of serine and glycine with tetrahydrofolate (THF) serving as the one-carbon carrier. This reaction serves as the major source of one-carbon groups required for the biosynthesis of purines, thymidylate, methionine, and other important biomolecules. Also exhibits THF-independent aldolase activity toward beta-hydroxyamino acids, producing glycine and aldehydes, via a retro-aldol mechanism. In Acinetobacter baylyi (strain ATCC 33305 / BD413 / ADP1), this protein is Serine hydroxymethyltransferase.